We begin with the raw amino-acid sequence, 460 residues long: ATP synthase subunit beta (460 aa).

Residue 150 to 157 coordinates ATP; it reads GGAGVGKT.

The protein belongs to the ATPase alpha/beta chains family. In terms of assembly, F-type ATPases have 2 components, CF(1) - the catalytic core - and CF(0) - the membrane proton channel. CF(1) has five subunits: alpha(3), beta(3), gamma(1), delta(1), epsilon(1). CF(0) has three main subunits: a(1), b(2) and c(9-12). The alpha and beta chains form an alternating ring which encloses part of the gamma chain. CF(1) is attached to CF(0) by a central stalk formed by the gamma and epsilon chains, while a peripheral stalk is formed by the delta and b chains.

The protein resides in the cell inner membrane. It carries out the reaction ATP + H2O + 4 H(+)(in) = ADP + phosphate + 5 H(+)(out). Functionally, produces ATP from ADP in the presence of a proton gradient across the membrane. The catalytic sites are hosted primarily by the beta subunits. The chain is ATP synthase subunit beta from Edwardsiella ictaluri (strain 93-146).